We begin with the raw amino-acid sequence, 120 residues long: Large ribosomal subunit protein uL18 (120 aa).

The protein belongs to the universal ribosomal protein uL18 family. Part of the 50S ribosomal subunit; part of the 5S rRNA/L5/L18/L25 subcomplex. Contacts the 5S and 23S rRNAs.

Its function is as follows. This is one of the proteins that bind and probably mediate the attachment of the 5S RNA into the large ribosomal subunit, where it forms part of the central protuberance. This is Large ribosomal subunit protein uL18 from Geobacillus thermodenitrificans (strain NG80-2).